We begin with the raw amino-acid sequence, 268 residues long: Undecaprenyl-diphosphatase (268 aa).

7 consecutive transmembrane segments (helical) span residues 5-25, 43-63, 84-104, 106-126, 184-204, 213-233, and 248-268; these read SIIS…IPVS, GNTF…LVYF, FSVL…HGFI, AVLF…GVIL, AAEF…TLDL, FDDI…GIVV, and PFAI…WLVG.

It belongs to the UppP family.

The protein localises to the cell inner membrane. It catalyses the reaction di-trans,octa-cis-undecaprenyl diphosphate + H2O = di-trans,octa-cis-undecaprenyl phosphate + phosphate + H(+). In terms of biological role, catalyzes the dephosphorylation of undecaprenyl diphosphate (UPP). Confers resistance to bacitracin. The chain is Undecaprenyl-diphosphatase from Sinorhizobium fredii (strain NBRC 101917 / NGR234).